A 254-amino-acid polypeptide reads, in one-letter code: RNA polymerase sigma-D factor (254 aa).

Positions 54 to 67 (DLMSLGMLGLYDAL) match the Polymerase core binding motif. The segment at residues 220–239 (LTEIGQVLNLSTSRISQIHS) is a DNA-binding region (H-T-H motif).

As to quaternary structure, monomer. Interacts transiently with the RNAP core.

Its function is as follows. Sigma factors are initiation factors that promote the attachment of RNA polymerase (RNAP) to specific initiation sites and are then released. This alternative sigma factor is required for the transcription of the flagellin and motility genes as well as for wild-type chemotaxis. Associates with the RNAP core during all growth phases with a peak at the transition to stationary phase. In Bacillus subtilis (strain 168), this protein is RNA polymerase sigma-D factor (sigD).